Consider the following 729-residue polypeptide: Ran-binding protein 9 (729 aa).

Residues Met1 to Gln11 are compositionally biased toward pro residues. The tract at residues Met1–Asp137 is disordered. Residues Leu27–Gly49 are compositionally biased toward low complexity. Residues Ser50–Leu60 are compositionally biased toward gly residues. The segment covering His70–Ala93 has biased composition (pro residues). Residues Gly107–Gly126 show a composition bias toward low complexity. Residues Leu147–Phe334 enclose the B30.2/SPRY domain. The region spanning Trp365–Val397 is the LisH domain. The tract at residues Leu401–Arg407 is interaction with CALB1. Residues Ser403–Val460 form the CTLH domain. Lys405 carries the N6-acetyllysine modification. Residues Arg461–Ser489 form a disordered region. The span at Ser473–Ser489 shows a compositional bias: low complexity. 2 positions are modified to phosphoserine: Ser477 and Ser487. An interaction with FMR1 region spans residues Ala615–His729.

Belongs to the RANBP9/10 family. In terms of assembly, part of a complex consisting of RANBP9, MKLN1 and GID8. Identified in the CTLH complex that contains GID4, RANBP9 and/or RANBP10, MKLN1, MAEA, RMND5A (or alternatively its paralog RMND5B), GID8, ARMC8, WDR26 and YPEL5. Within this complex, MAEA, RMND5A (or alternatively its paralog RMND5B), GID8, WDR26, and RANBP9 and/or RANBP10 form the catalytic core, while GID4, MKLN1, ARMC8 and YPEL5 have ancillary roles. Interacts with GTP-bound Ran, AR, CDC2L1/p110C, CALB1, S100A7, USP11, MKLN1, SOS1 or SOS2, GID8, and FMR1. Interacts with the Dyrk kinases HIPK2, DYRK1A, and DYRK1B. Interacts with TP73 isoform Alpha but not with TP53. Interacts with the HGF receptor MET and the integrins ITGB1 and ITGB2, but not with ITGAL. Part of a complex consisting of RANBP9, RAN, DYRK1B and COPS5. Directly interacts with RANBP10. Interacts with YPEL5. Interacts with DDX4. Interacts with NGFR. Interacts with TEX19. Phosphorylated in response to stress. Can be phosphorylated by the cleaved p110 form of CDC2L1 (p110C). In terms of processing, ubiquitinated. Polyubiquitination targets the protein for rapid degradation via the ubiquitin system. Can be deubiquitinated by USP11. As to expression, ubiquitously expressed, with highest levels in testes, placenta, heart, and muscle, and lowest levels in lung. Within the brain, expressed predominantly by neurons in the gray matter of cortex, the granular layer of cerebellum and the Purkinje cells.

The protein localises to the cytoplasm. It is found in the nucleus. Its subcellular location is the cell membrane. May act as scaffolding protein, and as adapter protein to couple membrane receptors to intracellular signaling pathways. Acts as a mediator of cell spreading and actin cytoskeleton rearrangement. Core component of the CTLH E3 ubiquitin-protein ligase complex that selectively accepts ubiquitin from UBE2H and mediates ubiquitination and subsequent proteasomal degradation of the transcription factor HBP1. May be involved in signaling of ITGB2/LFA-1 and other integrins. Enhances HGF-MET signaling by recruiting Sos and activating the Ras pathway. Enhances dihydrotestosterone-induced transactivation activity of AR, as well as dexamethasone-induced transactivation activity of NR3C1, but not affect estrogen-induced transactivation. Stabilizes TP73 isoform Alpha, probably by inhibiting its ubiquitination, and increases its proapoptotic activity. Inhibits the kinase activity of DYRK1A and DYRK1B. Inhibits FMR1 binding to RNA. The chain is Ran-binding protein 9 (RANBP9) from Homo sapiens (Human).